Here is a 299-residue protein sequence, read N- to C-terminus: HTH-type transcriptional regulator CrgA (299 aa).

Positions 1 to 60 constitute an HTH lysR-type domain; the sequence is MKTNSEELTVFVQVVESGSFSRAAEQLAMANSAVSRIVKRLEEKLGVNLLNRTTRQLSLT. A DNA-binding region (H-T-H motif) is located at residues 20 to 39; it reads FSRAAEQLAMANSAVSRIVK.

It belongs to the LysR transcriptional regulatory family. Forms oligomers. Forms an octomeric ring-like structure in solution. May form hexadecamers when bound to target DNA.

Its activity is regulated as follows. Activation and repression activities are enhanced by the addition of alpha-methylene-gamma-butyrolactone (MBL), an inducer of NADPH:quinone oxidoreductase. Its function is as follows. Regulatory protein that activates transcription of mdaB, encoding a NADPH:quinone oxidoreductase, and represses its own transcription. Under the same experimental conditions, no regulation of transcription of pilus and capsule genes is detected. This chain is HTH-type transcriptional regulator CrgA, found in Neisseria meningitidis serogroup B (strain ATCC BAA-335 / MC58).